Reading from the N-terminus, the 217-residue chain is Proteasome subunit beta type-9 (217 aa).

Positions 1 to 18 (MLDESLEPGWLSEEVKTG) are cleaved as a propeptide — removed in mature form. Threonine 19 acts as the Nucleophile in catalysis.

Belongs to the peptidase T1B family. As to quaternary structure, the 26S proteasome consists of a 20S proteasome core and two 19S regulatory subunits. The 20S proteasome core is composed of 28 subunits that are arranged in four stacked rings, resulting in a barrel-shaped structure. The two end rings are each formed by seven alpha subunits, and the two central rings are each formed by seven beta subunits. The catalytic chamber with the active sites is on the inside of the barrel. Component of the immunoproteasome, where it displaces the equivalent housekeeping subunit PSMB6. Post-translationally, autocleaved. The resulting N-terminal Thr residue of the mature subunit is responsible for the nucleophile proteolytic activity.

Its subcellular location is the cytoplasm. The protein resides in the nucleus. It catalyses the reaction Cleavage of peptide bonds with very broad specificity.. In terms of biological role, the proteasome is a multicatalytic proteinase complex which is characterized by its ability to cleave peptides with Arg, Phe, Tyr, Leu, and Glu adjacent to the leaving group at neutral or slightly basic pH. The proteasome has an ATP-dependent proteolytic activity. This subunit is involved in antigen processing to generate class I binding peptides. This is Proteasome subunit beta type-9 (psmb9) from Oncorhynchus mykiss (Rainbow trout).